The sequence spans 73 residues: Protein SlyX homolog (73 aa).

This sequence belongs to the SlyX family.

In Pasteurella multocida (strain Pm70), this protein is Protein SlyX homolog.